Consider the following 121-residue polypeptide: Small ribosomal subunit protein uS13 (121 aa).

A disordered region spans residues 97–121; the sequence is VRGQRTRTNARTRRGARKTVAGKKK. Basic residues predominate over residues 100-121; it reads QRTRTNARTRRGARKTVAGKKK.

This sequence belongs to the universal ribosomal protein uS13 family. Part of the 30S ribosomal subunit. Forms a loose heterodimer with protein S19. Forms two bridges to the 50S subunit in the 70S ribosome.

Functionally, located at the top of the head of the 30S subunit, it contacts several helices of the 16S rRNA. In the 70S ribosome it contacts the 23S rRNA (bridge B1a) and protein L5 of the 50S subunit (bridge B1b), connecting the 2 subunits; these bridges are implicated in subunit movement. Contacts the tRNAs in the A and P-sites. The protein is Small ribosomal subunit protein uS13 of Synechococcus sp. (strain CC9902).